Reading from the N-terminus, the 192-residue chain is Protein GrpE (192 aa).

Positions 1–43 (MQENKQPSEIQGELPQPPDGESVPPQPTNEQAPPDTDTMPRIE) are disordered.

It belongs to the GrpE family. In terms of assembly, homodimer.

It localises to the cytoplasm. In terms of biological role, participates actively in the response to hyperosmotic and heat shock by preventing the aggregation of stress-denatured proteins, in association with DnaK and GrpE. It is the nucleotide exchange factor for DnaK and may function as a thermosensor. Unfolded proteins bind initially to DnaJ; upon interaction with the DnaJ-bound protein, DnaK hydrolyzes its bound ATP, resulting in the formation of a stable complex. GrpE releases ADP from DnaK; ATP binding to DnaK triggers the release of the substrate protein, thus completing the reaction cycle. Several rounds of ATP-dependent interactions between DnaJ, DnaK and GrpE are required for fully efficient folding. In Aromatoleum aromaticum (strain DSM 19018 / LMG 30748 / EbN1) (Azoarcus sp. (strain EbN1)), this protein is Protein GrpE.